The sequence spans 427 residues: Enolase (427 aa).

Residue Q162 participates in (2R)-2-phosphoglycerate binding. The active-site Proton donor is the E204. D241, E284, and D311 together coordinate Mg(2+). K336, R365, S366, and K387 together coordinate (2R)-2-phosphoglycerate. Residue K336 is the Proton acceptor of the active site.

Belongs to the enolase family. Mg(2+) serves as cofactor.

It localises to the cytoplasm. The protein localises to the secreted. It is found in the cell surface. The catalysed reaction is (2R)-2-phosphoglycerate = phosphoenolpyruvate + H2O. The protein operates within carbohydrate degradation; glycolysis; pyruvate from D-glyceraldehyde 3-phosphate: step 4/5. Its function is as follows. Catalyzes the reversible conversion of 2-phosphoglycerate (2-PG) into phosphoenolpyruvate (PEP). It is essential for the degradation of carbohydrates via glycolysis. The chain is Enolase from Corynebacterium kroppenstedtii (strain DSM 44385 / JCM 11950 / CIP 105744 / CCUG 35717).